A 1732-amino-acid polypeptide reads, in one-letter code: Transient receptor potential cation channel subfamily M member 3 (1732 aa).

The Cytoplasmic segment spans residues Met1–Pro894. Calmodulin-binding stretches follow at residues Trp41–Trp64, Asn192–Gly215, Thr300–Asn323, Arg601–Gly624, and Arg793–Lys816. The segment at Pro617–Met625 is required for the inhibitory action of G-beta/gamma-subunits of heterotrimeric G-proteins. 1,2-dioctanoyl-sn-glycero-3-phospho-(1D-myo-inositol-4,5-bisphosphate) is bound at residue Ser796. The segment at Glu829 to Asp851 is disordered. Over residues His831–Lys847 the composition is skewed to basic and acidic residues. Residues Ile895 to Val918 form a helical membrane-spanning segment. Residues Lys919–Ser925 are Extracellular-facing. Residues Thr926–Met948 form a helical membrane-spanning segment. Over Ser949–Glu964 the chain is Cytoplasmic. The chain crosses the membrane as a helical span at residues Tyr965–Leu985. At Gln986 to Pro989 the chain is on the extracellular side. Residues Phe990–Phe1013 traverse the membrane as a helical segment. Over Gly1014–Lys1028 the chain is Cytoplasmic. Positions 1017 and 1018 each coordinate 1,2-dioctanoyl-sn-glycero-3-phospho-(1D-myo-inositol-4,5-bisphosphate). The chain crosses the membrane as a helical span at residues Met1029–Phe1056. Over Pro1057–Pro1073 the chain is Extracellular. The segment at residues Tyr1074–Thr1101 is an intramembrane region (pore-forming). At Ile1102–Ala1111 the chain is on the extracellular side. The helical transmembrane segment at Trp1112–Phe1137 threads the bilayer. Residues Asn1138 to Asn1732 lie on the Cytoplasmic side of the membrane. The segment at Glu1610–Asn1732 is disordered. 2 stretches are compositionally biased toward polar residues: residues Pro1635–Thr1653 and Asn1690–Ser1701.

Belongs to the transient receptor (TC 1.A.4) family. LTrpC subfamily. TRPM3 sub-subfamily. Homotetramer. Interacts with TRPM1; the interaction results in the formation of a heteromultimeric cation channel complex that are functionally different from the homomeric channels.

Its subcellular location is the cell membrane. The enzyme catalyses Ca(2+)(in) = Ca(2+)(out). It carries out the reaction Mn(2+)(in) = Mn(2+)(out). The catalysed reaction is Zn(2+)(in) = Zn(2+)(out). It catalyses the reaction Mg(2+)(in) = Mg(2+)(out). The enzyme catalyses Na(+)(in) = Na(+)(out). Activated by the neurosteroid pregnelonone sulfate (PregS). PregS activates the channel by shifting its current-voltage activation curve toward more negative membrane potentials and also potentiates temperature-induced activation. Activated by heat. Intracellular Ca(2+) inhibits TRPM3 probably via interaction with Ca(2+)/calmodulin. Intracellular Mg(2+) inhibits TRPM3 activity. Both intracellular and extracellular protons block TRPM3 through propable binding sites in the pore region. Positively regulated by phosphoinositide phosphoinositol 4,5-biphosphate (PI(4,5)P2). Strongly inhibited by activation of G(i)-coupled receptors via direct binding with G-beta/gamma-subunits of heterotrimeric G-proteins. With respect to regulation, insensitive to pregnenolone sulfate (PregS) or heat. Its activity is regulated as follows. Not inhibited by G-beta/gamma-subunits of heterotrimeric G-proteins. Constitutively active, non-selective divalent cation-conducting channel that is permeable to Ca(2+), Mn(2+), and Mg(2+), with a high permeability for Ca(2+). However, can be enhanced by increasing temperature and by ligands, including the endogenous neurosteroid pregnenolone sulfate and sphingosine-1 and suppressed by intracellular Mg(2+). Implicated in a variety of cellular processes, including insulin/peptide secretion, vascular constriction and dilation, noxious heat sensing, inflammatory and spontaneous pain sensitivity. In neurons of the dorsal root ganglia, functions as thermosensitive channel for the detection of noxious heat and spontaneous pain. Suggested to function as an ionotropic steroid receptor in beta-cell, indeed pregnenolone sulfate leads to Ca(2+) influx and enhanced insulin secretion. Mediates Zn(2+) uptake into the lumen of pancreatic beta cell secretory granules, thereby regulating insulin secretion. Forms heteromultimeric ion channels with TRPM1 which are permeable for Ca(2+) and Zn(2+) ions. Exists as multiple splice variants which differ significantly in their biophysical properties. Its function is as follows. Displays strongly reduced permeability for divalent cations and high selectivity toward monovalent cations. Functionally, no channel activity. The sequence is that of Transient receptor potential cation channel subfamily M member 3 from Mus musculus (Mouse).